Here is a 321-residue protein sequence, read N- to C-terminus: UPF0026 protein MJ1312 (321 aa).

The region spanning 11 to 236 (RRLGKSLGIN…AIFNEIIGKN (226 aa)) is the Radical SAM core domain. [4Fe-4S] cluster is bound by residues Cys-27, Cys-31, and Cys-34.

This sequence belongs to the UPF0026 family. The cofactor is [4Fe-4S] cluster.

This Methanocaldococcus jannaschii (strain ATCC 43067 / DSM 2661 / JAL-1 / JCM 10045 / NBRC 100440) (Methanococcus jannaschii) protein is UPF0026 protein MJ1312.